The primary structure comprises 129 residues: Venom CUB domain-containing protein 1 (129 aa).

The N-terminal stretch at 1 to 18 (MKLLGVLITIYCIASTLA) is a signal peptide. The region spanning 19–121 (IDVNVPSNGM…KASCKAYSIT (103 aa)) is the CUB domain. A disulfide bond links C66 and C83.

This sequence belongs to the venom CUB family. Contains 2 disulfide bonds. Expressed by the venom gland.

The protein resides in the secreted. This chain is Venom CUB domain-containing protein 1, found in Platymeris rhadamanthus (Red spot assassin bug).